An 86-amino-acid chain; its full sequence is UPF0457 protein SSP0714 (86 aa).

This sequence belongs to the UPF0457 family.

In Staphylococcus saprophyticus subsp. saprophyticus (strain ATCC 15305 / DSM 20229 / NCIMB 8711 / NCTC 7292 / S-41), this protein is UPF0457 protein SSP0714.